The following is a 466-amino-acid chain: Asparagine--tRNA ligase (466 aa).

The protein belongs to the class-II aminoacyl-tRNA synthetase family. As to quaternary structure, homodimer.

The protein resides in the cytoplasm. The catalysed reaction is tRNA(Asn) + L-asparagine + ATP = L-asparaginyl-tRNA(Asn) + AMP + diphosphate + H(+). In Shewanella sp. (strain MR-7), this protein is Asparagine--tRNA ligase.